We begin with the raw amino-acid sequence, 751 residues long: Proton-associated sugar transporter A (751 aa).

Helical transmembrane passes span 93–113, 123–143, 155–175, 191–211, 233–253, and 268–288; these read ILFGIEFSYAMETAYVTPVLL, SLVWFISPILGFLLQPLLGAW, RPFILVLAIGALLGLSLLLNG, WGILLTVCGVVLMDFSADSAD, IHALMAGLGGGFGYVVGGIHW, and VIYVFTAITLSVTTVLTLISI. At Thr-500 the chain carries Phosphothreonine. Helical transmembrane passes span 536-556, 576-596, 606-626, 630-650, 688-708, and 710-730; these read GWLSFEGMLLFYTDFMGEVVF, VTMGCWGMCIYAFSAAFYSAI, VRTLYFIAYLAFGLGTGLATL, LYVVLSLCTTYGILFSTLCTL, FLAQILVSLVLGPLTSAVGSA, and GVMYFSSLVSFLGCLYSSLCV.

The protein belongs to the glycoside-pentoside-hexuronide (GPH) cation symporter transporter (TC 2.A.2) family.

It is found in the membrane. It carries out the reaction D-galactose(in) + H(+)(in) = D-galactose(out) + H(+)(out). The enzyme catalyses D-glucose(out) + H(+)(out) = D-glucose(in) + H(+)(in). In terms of biological role, proton-associated glucose transporter in the brain. The sequence is that of Proton-associated sugar transporter A from Mus musculus (Mouse).